Consider the following 306-residue polypeptide: Protoheme IX farnesyltransferase (306 aa).

8 consecutive transmembrane segments (helical) span residues 31–50, 55–77, 104–124, 125–145, 168–188, 218–235, 238–258, and 286–306; these read VIEL…QGGW, LILG…NCYI, LVFA…ISNW, LAAA…TLWL, WAAV…IVFL, GRAA…ATLA, LLLI…LAGG, and ASIS…LLPF.

The protein belongs to the UbiA prenyltransferase family. Protoheme IX farnesyltransferase subfamily.

It localises to the cell membrane. The enzyme catalyses heme b + (2E,6E)-farnesyl diphosphate + H2O = Fe(II)-heme o + diphosphate. It participates in porphyrin-containing compound metabolism; heme O biosynthesis; heme O from protoheme: step 1/1. Its function is as follows. Converts heme B (protoheme IX) to heme O by substitution of the vinyl group on carbon 2 of heme B porphyrin ring with a hydroxyethyl farnesyl side group. The protein is Protoheme IX farnesyltransferase of Clavibacter michiganensis subsp. michiganensis (strain NCPPB 382).